The following is a 733-amino-acid chain: MTFPEADILLKSGECAGQTMLDTMEAPGHSRQLLLQLNNQRTKGFLCDVIIVVQNALFRAHKNVLAASSAYLKSLVVHDNLLNLDHDMVSPAVFRLVLDFIYTGRLTDSVEAAAAAAVAPGAEPSLGAVLAAASYLQIPDLVALCKKRLKRHGKYCHLRGGGSGGGGYAPYGRPGRGLRAATPVIQACYSSPAGPPPPPAAEPPSGPDAAVNTHCAELYASGPGPAASLCAPERRCSPLCGLDLSKKSPPGSSVPERPLSERELPPRPDSPPGAGPAVYKEPSLALPPLPPLPFQKLEEAVPTPDPFRGSGGSPGPEPPGRPDGSSLLYRWMKHEPGLGSYGDELVRDRGSPGERLEERGGDPAASPGGPPLGLVPPPRYPGSLDGPGTGADGDDYKSSSEETGSSEDPSPPGGHLEGYPCPHLAYGEPESFGDNLYVCIPCGKGFPSSEQLNAHVEAHVEEEEALYGRAEAAEVAAGAAGLGPPFGGGGDKVTGAPGGLGELLRPYRCASCDKSYKDPATLRQHEKTHWLTRPYPCTICGKKFTQRGTMTRHMRSHLGLKPFACDACGMRFTRQYRLTEHMRIHSGEKPYECQVCGGKFAQQRNLISHMKMHAVGGAAGAAGALAGLGGLPGVPGPDGKGKLDFPEGVFAVARLTAEQLSLKQQDKAAAAELLAQTTHFLHDPKVALESLYPLAKFTAELGLSPDKAAEVLSQGAHLAAGPDSRTIDRFSPT.

Residues 47-110 form the BTB domain; that stretch reads CDVIIVVQNA…IYTGRLTDSV (64 aa). The tract at residues 154 to 315 is mediates HDAC-dependent transcriptional repression; sequence KYCHLRGGGS…PFRGSGGSPG (162 aa). Position 159 is an omega-N-methylarginine (arginine 159). The segment at 189-209 is disordered; that stretch reads YSSPAGPPPPPAAEPPSGPDA. Residues 193–206 show a composition bias toward pro residues; the sequence is AGPPPPPAAEPPSG. At serine 237 the chain carries Phosphoserine. Residues 241–247 are interaction with CTBP1; the sequence is GLDLSKK. The segment at 241 to 421 is disordered; it reads GLDLSKKSPP…PGGHLEGYPC (181 aa). Position 248 is a phosphoserine (serine 248). Lysine 333 carries the post-translational modification N6-acetyllysine; alternate. Residue lysine 333 forms a Glycyl lysine isopeptide (Lys-Gly) (interchain with G-Cter in SUMO); alternate linkage. Positions 344-361 are enriched in basic and acidic residues; that stretch reads ELVRDRGSPGERLEERGG. The residue at position 366 (serine 366) is a Phosphoserine. Positions 368–380 are enriched in pro residues; it reads GGPPLGLVPPPRY. 5 C2H2-type zinc fingers span residues 437–464, 507–534, 535–562, 563–590, and 591–618; these read YVCI…EEEE, YRCA…LTRP, YPCT…GLKP, FACD…GEKP, and YECQ…VGGA. Serine 704 carries the phosphoserine modification.

It belongs to the krueppel C2H2-type zinc-finger protein family. Hic subfamily. Self-associates. Interacts with HIC2. Interacts with CTBP1 and CTBP2. Interacts with TCF7L2 and ARID1A. Interacts with MTA1 and MBD3; indicative for an association with the NuRD complex. Interacts with SIRT1. Post-translationally, acetylated on several residues, including Lys-333. Lys-333 is deacetylated by SIRT1. In terms of processing, sumoylated on Lys-333 by a PIAS family member, which enhances interaction with MTA1, positively regulates transcriptional repression activity and is enhanced by HDAC4. Ubiquitously expressed with highest levels in heart and lung.

The protein resides in the nucleus. Functionally, transcriptional repressor. Recognizes and binds to the consensus sequence '5-[CG]NG[CG]GGGCA[CA]CC-3'. May act as a tumor suppressor. Involved in development of head, face, limbs and ventral body wall. Involved in down-regulation of SIRT1 and thereby is involved in regulation of p53/TP53-dependent apoptotic DNA-damage responses. The specific target gene promoter association seems to be depend on corepressors, such as CTBP1 or CTBP2 and MTA1. In cooperation with MTA1 (indicative for an association with the NuRD complex) represses transcription from CCND1/cyclin-D1 and CDKN1C/p57Kip2 specifically in quiescent cells. Involved in regulation of the Wnt signaling pathway probably by association with TCF7L2 and preventing TCF7L2 and CTNNB1 association with promoters of TCF-responsive genes. Seems to repress transcription from E2F1 and ATOH1 which involves ARID1A, indicative for the participation of a distinct SWI/SNF-type chromatin-remodeling complex. Probably represses transcription from ACKR3, FGFBP1 and EFNA1. This is Hypermethylated in cancer 1 protein (Hic1) from Mus musculus (Mouse).